Here is a 306-residue protein sequence, read N- to C-terminus: Methionyl-tRNA formyltransferase (306 aa).

Ser-108 to Pro-111 is a (6S)-5,6,7,8-tetrahydrofolate binding site.

The protein belongs to the Fmt family.

It carries out the reaction L-methionyl-tRNA(fMet) + (6R)-10-formyltetrahydrofolate = N-formyl-L-methionyl-tRNA(fMet) + (6S)-5,6,7,8-tetrahydrofolate + H(+). Its function is as follows. Attaches a formyl group to the free amino group of methionyl-tRNA(fMet). The formyl group appears to play a dual role in the initiator identity of N-formylmethionyl-tRNA by promoting its recognition by IF2 and preventing the misappropriation of this tRNA by the elongation apparatus. This chain is Methionyl-tRNA formyltransferase, found in Arthrobacter sp. (strain FB24).